The chain runs to 548 residues: Ankyrin repeat domain-containing protein SOWAHA (548 aa).

Positions 1 to 19 (MALAAAAAAAAAAAGVSQA) are cleaved as a signal peptide. The segment at 114–212 (EDNCAPGAPH…PPTAQVPPQK (99 aa)) is disordered. The segment covering 136 to 153 (SAPSELQHTPETLPSEVT) has biased composition (polar residues). Pro residues predominate over residues 198-212 (GPEPAPPTAQVPPQK). S258 carries the post-translational modification Phosphoserine. ANK repeat units follow at residues 344-373 (SGFT…RGGA) and 383-413 (GGYT…QVHV). Positions 512-548 (PRKKTKIRGGLPSFTEISHRSTPGPLAGLVPSLPPPT) are disordered.

It belongs to the SOWAH family.

The protein is Ankyrin repeat domain-containing protein SOWAHA (Sowaha) of Mus musculus (Mouse).